Here is a 373-residue protein sequence, read N- to C-terminus: Zinc finger protein CONSTANS-LIKE 10 (373 aa).

Zn(2+) is bound by residues Cys-5, Cys-8, Cys-28, His-33, Cys-48, Cys-51, Cys-71, and His-76. The segment at 5-47 (CDFCGEQRSMVYCRSDAACLCLSCDRNVHSANALSKRHSRTLV) adopts a B box-type 1; atypical zinc-finger fold. The segment at 48–92 (CERCNAQPASVRCSDERVSLCQNCDWSGHDGKNSTTTSHHKRQTI) adopts a B box-type 2; atypical zinc-finger fold. Residues 152-172 (PETSSAAQGMDHSSVPENSSM) form a disordered region. The region spanning 316 to 358 (RNNAVMRYKEKKKARKFDKRVRYVSRKERADVRRRVKGRFVKS) is the CCT domain.

The protein belongs to the CONSTANS family.

It is found in the nucleus. This chain is Zinc finger protein CONSTANS-LIKE 10 (COL10), found in Arabidopsis thaliana (Mouse-ear cress).